Reading from the N-terminus, the 112-residue chain is UPF0060 membrane protein Arth_4238 (112 aa).

4 consecutive transmembrane segments (helical) span residues 7 to 27 (ILLF…VWQA), 33 to 53 (EWWW…AATL), 62 to 82 (ILAA…MVFD), and 88 to 108 (RWDI…MFAP).

This sequence belongs to the UPF0060 family.

It localises to the cell membrane. This is UPF0060 membrane protein Arth_4238 from Arthrobacter sp. (strain FB24).